Consider the following 372-residue polypeptide: Probable leucine aminopeptidase MCYG_08380 (372 aa).

An N-terminal signal peptide occupies residues 1–19 (MKVSVLAAVAAFAAATAIA). A glycan (N-linked (GlcNAc...) asparagine) is linked at asparagine 96. Residues histidine 175 and aspartate 194 each contribute to the Zn(2+) site. N-linked (GlcNAc...) asparagine glycosylation is found at asparagine 195 and asparagine 219. Residues glutamate 233 and aspartate 260 each coordinate Zn(2+). A disulfide bond links cysteine 305 and cysteine 309. Histidine 338 provides a ligand contact to Zn(2+).

This sequence belongs to the peptidase M28 family. M28E subfamily. As to quaternary structure, monomer. Zn(2+) is required as a cofactor.

The protein resides in the secreted. Functionally, probable extracellular aminopeptidase which contributes to pathogenicity. This chain is Probable leucine aminopeptidase MCYG_08380, found in Arthroderma otae (strain ATCC MYA-4605 / CBS 113480) (Microsporum canis).